Consider the following 83-residue polypeptide: Mu-theraphotoxin-Hhn2n (83 aa).

Positions 1–21 (MKASMYLALAGLVLLFVVGYA) are cleaved as a signal peptide. Residues 22-48 (SESEEKEFPRELLSKIFAVDDFKGEER) constitute a propeptide that is removed on maturation. Intrachain disulfides connect Cys-50–Cys-65, Cys-57–Cys-70, and Cys-64–Cys-77. Position 81 is a leucine amide (Leu-81).

This sequence belongs to the neurotoxin 10 (Hwtx-1) family. 15 (Hntx-3) subfamily. In terms of assembly, monomer. In terms of tissue distribution, expressed by the venom gland.

The protein localises to the secreted. In terms of biological role, lethal neurotoxin. Selectively blocks tetrodotoxin-sensitive voltage-gated sodium channels (Nav). Does not affect tetrodotoxin-resistant voltage-gated sodium channels or calcium channels. The protein is Mu-theraphotoxin-Hhn2n of Cyriopagopus hainanus (Chinese bird spider).